A 420-amino-acid chain; its full sequence is Sulfate adenylyltransferase (420 aa).

N-acetylalanine is present on A2.

The protein belongs to the sulfate adenylyltransferase family. It depends on Mg(2+) as a cofactor.

It carries out the reaction sulfate + ATP + H(+) = adenosine 5'-phosphosulfate + diphosphate. It participates in sulfur metabolism; hydrogen sulfide biosynthesis; sulfite from sulfate: step 1/3. With respect to regulation, inhibited by adenosine 5'-phosphosulfate (APS), but not by 3'phosphoadenosine 5'-phosphosulfate (PAPS). Inhibited by AMP, ADP, CTP, GTP, ITP, UTP and anions other than those in group IV. The chain is Sulfate adenylyltransferase from Pyropia yezoensis (Susabi-nori).